Consider the following 61-residue polypeptide: UPF0434 protein Pput_3813 (61 aa).

The protein belongs to the UPF0434 family.

This chain is UPF0434 protein Pput_3813, found in Pseudomonas putida (strain ATCC 700007 / DSM 6899 / JCM 31910 / BCRC 17059 / LMG 24140 / F1).